A 658-amino-acid polypeptide reads, in one-letter code: PTS system 2-O-alpha-mannosyl-D-glycerate-specific EIIABC component (658 aa).

Over 1 to 313 (MVLFYRAHWR…TELKQALLSG (313 aa)) the chain is Periplasmic. Residues 25 to 171 (TLTHRDALCL…DELLSALDDK (147 aa)) form the PTS EIIA type-2 domain. The Tele-phosphohistidine intermediate; for EIIA activity role is filled by H87. Residue H87 is modified to Phosphohistidine; by HPr. Positions 186-282 (IVCVTACPAG…AEALIQQALT (97 aa)) constitute a PTS EIIB type-2 domain. C192 acts as the Phosphocysteine intermediate; for EIIB activity in catalysis. The residue at position 192 (C192) is a Phosphocysteine; by EIIA. Residues 306–641 (LKQALLSGIS…AISTAILLMW (336 aa)) form the PTS EIIC type-2 domain. Residues 314-334 (ISFAVPLIVAGGTVLAVAVLL) traverse the membrane as a helical segment. Over 335–358 (SQIFGLQDLFNEENSWLWMYRKLG) the chain is Cytoplasmic. A helical transmembrane segment spans residues 359-379 (GGLLGILMVPVLAAYTAYSLA). Residues 380-389 (DKPALAPGFA) are Periplasmic-facing. Residues 390-410 (AGLAANMIGSGFLGAVVGGLI) traverse the membrane as a helical segment. The Cytoplasmic portion of the chain corresponds to 411 to 433 (AGYLMRWVKNHLRLSSKFNGFLT). The chain crosses the membrane as a helical span at residues 434–454 (FYLYPVLGTLGAGSLMLFVVG). Over 455–474 (EPVAWINNSLTAWLNGLSGS) the chain is Periplasmic. Residues 475-495 (NALLLGAILGFMCSFDLGGPV) traverse the membrane as a helical segment. Residues 496 to 500 (NKAAY) are Cytoplasmic-facing. The helical transmembrane segment at 501–521 (AFCLGAMANGVYGPYAIFASV) threads the bilayer. At 522–551 (KMVSAFTVTASTMLAPRLFKEFEIETGKST) the chain is on the periplasmic side. The helical transmembrane segment at 552–572 (WLLGLAGITEGAIPMAIEDPL) threads the bilayer. A topological domain (cytoplasmic) is located at residue R573. A helical transmembrane segment spans residues 574 to 594 (VIGSFVLGSMVTGAIVGAMNI). Residues 595-620 (GLSTPGAGIFSLFLLHDNGAGGVMAA) lie on the Periplasmic side of the membrane. Residues 621 to 641 (IGWFGAALVGAAISTAILLMW) traverse the membrane as a helical segment. Over 642 to 658 (RRHAVKHGNYLTDGVMP) the chain is Cytoplasmic.

The protein localises to the cell inner membrane. It catalyses the reaction (2R)-2-O-(alpha-D-mannosyl)-glycerate(out) + N(pros)-phospho-L-histidyl-[protein] = (2R)-2-O-(6-phospho-alpha-D-mannosyl)-glycerate(in) + L-histidyl-[protein]. In terms of biological role, the phosphoenolpyruvate-dependent sugar phosphotransferase system (sugar PTS), a major carbohydrate active transport system, catalyzes the phosphorylation of incoming sugar substrates concomitantly with their translocation across the cell membrane. This system is involved in mannosyl-D-glycerate transport. Also involved in thermoinduction of ompC. The polypeptide is PTS system 2-O-alpha-mannosyl-D-glycerate-specific EIIABC component (Escherichia coli (strain K12)).